The primary structure comprises 334 residues: RNA 3'-terminal phosphate cyclase (334 aa).

An ATP-binding site is contributed by 279–282; it reads HMGD. H303 functions as the Tele-AMP-histidine intermediate in the catalytic mechanism.

This sequence belongs to the RNA 3'-terminal cyclase family. Type 1 subfamily.

It is found in the cytoplasm. The enzyme catalyses a 3'-end 3'-phospho-ribonucleotide-RNA + ATP = a 3'-end 2',3'-cyclophospho-ribonucleotide-RNA + AMP + diphosphate. Catalyzes the conversion of 3'-phosphate to a 2',3'-cyclic phosphodiester at the end of RNA. The mechanism of action of the enzyme occurs in 3 steps: (A) adenylation of the enzyme by ATP; (B) transfer of adenylate to an RNA-N3'P to produce RNA-N3'PP5'A; (C) and attack of the adjacent 2'-hydroxyl on the 3'-phosphorus in the diester linkage to produce the cyclic end product. The biological role of this enzyme is unknown but it is likely to function in some aspects of cellular RNA processing. The sequence is that of RNA 3'-terminal phosphate cyclase from Metallosphaera sedula (strain ATCC 51363 / DSM 5348 / JCM 9185 / NBRC 15509 / TH2).